The sequence spans 109 residues: Iron-sulfur cluster assembly protein CyaY (109 aa).

Belongs to the frataxin family.

Its function is as follows. Involved in iron-sulfur (Fe-S) cluster assembly. May act as a regulator of Fe-S biogenesis. The sequence is that of Iron-sulfur cluster assembly protein CyaY from Bordetella petrii (strain ATCC BAA-461 / DSM 12804 / CCUG 43448).